The sequence spans 355 residues: UDP-N-acetylglucosamine--N-acetylmuramyl-(pentapeptide) pyrophosphoryl-undecaprenol N-acetylglucosamine transferase (355 aa).

UDP-N-acetyl-alpha-D-glucosamine-binding positions include 12-14, asparagine 124, arginine 160, serine 192, isoleucine 243, 262-267, and glutamine 287; these read TGG and ALTVCE.

This sequence belongs to the glycosyltransferase 28 family. MurG subfamily.

It is found in the cell inner membrane. The enzyme catalyses di-trans,octa-cis-undecaprenyl diphospho-N-acetyl-alpha-D-muramoyl-L-alanyl-D-glutamyl-meso-2,6-diaminopimeloyl-D-alanyl-D-alanine + UDP-N-acetyl-alpha-D-glucosamine = di-trans,octa-cis-undecaprenyl diphospho-[N-acetyl-alpha-D-glucosaminyl-(1-&gt;4)]-N-acetyl-alpha-D-muramoyl-L-alanyl-D-glutamyl-meso-2,6-diaminopimeloyl-D-alanyl-D-alanine + UDP + H(+). Its pathway is cell wall biogenesis; peptidoglycan biosynthesis. Cell wall formation. Catalyzes the transfer of a GlcNAc subunit on undecaprenyl-pyrophosphoryl-MurNAc-pentapeptide (lipid intermediate I) to form undecaprenyl-pyrophosphoryl-MurNAc-(pentapeptide)GlcNAc (lipid intermediate II). This is UDP-N-acetylglucosamine--N-acetylmuramyl-(pentapeptide) pyrophosphoryl-undecaprenol N-acetylglucosamine transferase from Haemophilus ducreyi (strain 35000HP / ATCC 700724).